Here is a 964-residue protein sequence, read N- to C-terminus: Adhesion defective protein 3 (964 aa).

The interval 1 to 32 (MADFMDIEPSSHSAKASQYESSAPASSSLGNS) is disordered. Positions 16–32 (ASQYESSAPASSSLGNS) are enriched in low complexity. A LisH domain is found at 34–66 (PNESLDYYIYDYFVKHNFEEAAQAFLRESKIQI). Residues 69 to 83 (SSSSTAFSPSNNNAP) are compositionally biased toward low complexity. Disordered stretches follow at residues 69–125 (SSSS…EETN), 241–273 (PKGT…PASA), 476–523 (VSMK…TSRM), 572–596 (QTLS…MSMD), and 664–914 (APMI…KPIS). 3 stretches are compositionally biased toward polar residues: residues 93 to 103 (LASPSKISESI), 261 to 270 (AMQNPHNSFP), and 508 to 523 (TQAN…TSRM). Low complexity predominate over residues 575–589 (SSGNQPPQQSGPNPN). Polar residues-rich tracts occupy residues 664 to 700 (APMI…TNRN), 707 to 716 (SPHQQFSPSA), 724 to 752 (RSMS…QNKE), 767 to 801 (AFPQ…SSLH), 818 to 828 (TIRTTERSTFS), and 857 to 868 (GGTNSISQDTTQ). A compositionally biased stretch (low complexity) spans 869–885 (SLQMQSNSVNSSSMVDA). A compositionally biased stretch (polar residues) spans 894-905 (GDTSALDSNAKN).

Belongs to the FLO8 family.

It is found in the cytoplasm. It localises to the nucleus. Its function is as follows. Probable transcriptional regulator involved in cell adhesion. The chain is Adhesion defective protein 3 (adn3) from Schizosaccharomyces pombe (strain 972 / ATCC 24843) (Fission yeast).